We begin with the raw amino-acid sequence, 245 residues long: 1-(5-phosphoribosyl)-5-[(5-phosphoribosylamino)methylideneamino] imidazole-4-carboxamide isomerase (245 aa).

Asp-7 serves as the catalytic Proton acceptor. Asp-129 serves as the catalytic Proton donor.

It belongs to the HisA/HisF family.

It localises to the cytoplasm. The catalysed reaction is 1-(5-phospho-beta-D-ribosyl)-5-[(5-phospho-beta-D-ribosylamino)methylideneamino]imidazole-4-carboxamide = 5-[(5-phospho-1-deoxy-D-ribulos-1-ylimino)methylamino]-1-(5-phospho-beta-D-ribosyl)imidazole-4-carboxamide. The protein operates within amino-acid biosynthesis; L-histidine biosynthesis; L-histidine from 5-phospho-alpha-D-ribose 1-diphosphate: step 4/9. The protein is 1-(5-phosphoribosyl)-5-[(5-phosphoribosylamino)methylideneamino] imidazole-4-carboxamide isomerase of Enterobacter sp. (strain 638).